We begin with the raw amino-acid sequence, 320 residues long: MEQVELIPQWYVAPVSVKDEAVVRNLKAKVKALGFDNEILDVRVLKEREVIEEVFSLKSGKLPRSLKNTAFTKWFVLDEDRYLKVKISEKNLLGRYIYIKMIYSEDAWRIIRNFPGITGIVGSSGRGALPTPLDQADADNLEQMLKGISVNPKKRVLVTNTAIVEMDADKFDEKCQYILKHKQVKPEAIAQVNESGEIIDTNQFAQALMEANKAEQDEWNEDVAIVKSEANKVDPSVLIPYLGKYEIVEGDTKVDQLQQFSVGNLVEVHLTGAIHIQGQIKALYQGTINKAVVEVELTTKTQLINLPLENLSFIEVEQSH.

Belongs to the NusG family.

Participates in transcription elongation, termination and antitermination. In Mycoplasma pneumoniae (strain ATCC 29342 / M129 / Subtype 1) (Mycoplasmoides pneumoniae), this protein is Transcription termination/antitermination protein NusG.